A 465-amino-acid polypeptide reads, in one-letter code: Ribulose bisphosphate carboxylase large chain (465 aa).

Residue Lys-4 is modified to N6,N6,N6-trimethyllysine. Positions 113 and 163 each coordinate substrate. Lys-165 serves as the catalytic Proton acceptor. Residue Lys-167 coordinates substrate. 3 residues coordinate Mg(2+): Lys-191, Asp-193, and Glu-194. Position 191 is an N6-carboxylysine (Lys-191). Residue His-284 is the Proton acceptor of the active site. Substrate-binding residues include Arg-285, His-317, and Ser-369.

Belongs to the RuBisCO large chain family. Type I subfamily. Heterohexadecamer of 8 large chains and 8 small chains; disulfide-linked. The disulfide link is formed within the large subunit homodimers. It depends on Mg(2+) as a cofactor. In terms of processing, the disulfide bond which can form in the large chain dimeric partners within the hexadecamer appears to be associated with oxidative stress and protein turnover.

The protein resides in the plastid. The protein localises to the chloroplast. It carries out the reaction 2 (2R)-3-phosphoglycerate + 2 H(+) = D-ribulose 1,5-bisphosphate + CO2 + H2O. The enzyme catalyses D-ribulose 1,5-bisphosphate + O2 = 2-phosphoglycolate + (2R)-3-phosphoglycerate + 2 H(+). In terms of biological role, ruBisCO catalyzes two reactions: the carboxylation of D-ribulose 1,5-bisphosphate, the primary event in carbon dioxide fixation, as well as the oxidative fragmentation of the pentose substrate in the photorespiration process. Both reactions occur simultaneously and in competition at the same active site. This is Ribulose bisphosphate carboxylase large chain from Ailanthus altissima (Tree-of-heaven).